The chain runs to 251 residues: Coproheme decarboxylase (251 aa).

Fe-coproporphyrin III is bound by residues arginine 133, 147-151, histidine 174, glutamine 187, and serine 225; that span reads YPMSK. Residue tyrosine 147 is part of the active site.

The protein belongs to the ChdC family. Type 1 subfamily. Requires Fe-coproporphyrin III as cofactor.

It catalyses the reaction Fe-coproporphyrin III + 2 H2O2 + 2 H(+) = heme b + 2 CO2 + 4 H2O. The catalysed reaction is Fe-coproporphyrin III + H2O2 + H(+) = harderoheme III + CO2 + 2 H2O. The enzyme catalyses harderoheme III + H2O2 + H(+) = heme b + CO2 + 2 H2O. The protein operates within porphyrin-containing compound metabolism; protoheme biosynthesis. Functionally, involved in coproporphyrin-dependent heme b biosynthesis. Catalyzes the decarboxylation of Fe-coproporphyrin III (coproheme) to heme b (protoheme IX), the last step of the pathway. The reaction occurs in a stepwise manner with a three-propionate intermediate. This is Coproheme decarboxylase from Listeria welshimeri serovar 6b (strain ATCC 35897 / DSM 20650 / CCUG 15529 / CIP 8149 / NCTC 11857 / SLCC 5334 / V8).